The sequence spans 122 residues: Large ribosomal subunit protein uL14 (122 aa).

The protein belongs to the universal ribosomal protein uL14 family. In terms of assembly, part of the 50S ribosomal subunit. Forms a cluster with proteins L3 and L19. In the 70S ribosome, L14 and L19 interact and together make contacts with the 16S rRNA in bridges B5 and B8.

Its function is as follows. Binds to 23S rRNA. Forms part of two intersubunit bridges in the 70S ribosome. This is Large ribosomal subunit protein uL14 from Chlamydia trachomatis serovar A (strain ATCC VR-571B / DSM 19440 / HAR-13).